Reading from the N-terminus, the 465-residue chain is Gamma-aminobutyric acid receptor subunit gamma-1 (465 aa).

The first 20 residues, 1 to 20, serve as a signal peptide directing secretion; that stretch reads MGSGKVFLFSPSLLWSQTRG. The Extracellular segment spans residues 21–273; that stretch reads VRLIFLLLTL…FDLSRRMGYF (253 aa). Residues N50 and N127 are each glycosylated (N-linked (GlcNAc...) asparagine). C188 and C202 form a disulfide bridge. N245 carries N-linked (GlcNAc...) asparagine glycosylation. A helical membrane pass occupies residues 274 to 294; sequence TIQTYIPCILTVVLSWVSFWI. At 295–300 the chain is on the cytoplasmic side; sequence NKDAVP. Residues 301 to 320 form a helical membrane-spanning segment; it reads ARTSLGITTVLTMTTLSTIA. Residues 321 to 328 lie on the Extracellular side of the membrane; it reads RKSLPKVS. A helical transmembrane segment spans residues 329-349; sequence YVTAMDLFVSVCFIFVFAALM. The Cytoplasmic segment spans residues 350 to 444; it reads EYGTLHYFTS…RIAKIDSYSR (95 aa). The chain crosses the membrane as a helical span at residues 445–465; the sequence is IFFPTAFALFNLVYWVGYLYL.

The protein belongs to the ligand-gated ion channel (TC 1.A.9) family. Gamma-aminobutyric acid receptor (TC 1.A.9.5) subfamily. GABRG1 sub-subfamily. Heteropentamer, formed by a combination of alpha (GABRA1-6), beta (GABRB1-3), gamma (GABRG1-3), delta (GABRD), epsilon (GABRE), rho (GABRR1-3), pi (GABRP) and theta (GABRQ) chains, each subunit exhibiting distinct physiological and pharmacological properties. In terms of processing, may be palmitoylated. In terms of tissue distribution, expressed in brain.

Its subcellular location is the postsynaptic cell membrane. It is found in the cell membrane. It carries out the reaction chloride(in) = chloride(out). Gamma subunit of the heteropentameric ligand-gated chloride channel gated by gamma-aminobutyric acid (GABA), a major inhibitory neurotransmitter in the brain. GABA-gated chloride channels, also named GABA(A) receptors (GABAAR), consist of five subunits arranged around a central pore and contain GABA active binding site(s) located at the alpha and beta subunit interface(s). When activated by GABA, GABAARs selectively allow the flow of chloride anions across the cell membrane down their electrochemical gradient. Chloride influx into the postsynaptic neuron following GABAAR opening decreases the neuron ability to generate a new action potential, thereby reducing nerve transmission. The sequence is that of Gamma-aminobutyric acid receptor subunit gamma-1 from Rattus norvegicus (Rat).